Consider the following 209-residue polypeptide: Protein-L-isoaspartate O-methyltransferase (209 aa).

S55 is a catalytic residue.

The protein belongs to the methyltransferase superfamily. L-isoaspartyl/D-aspartyl protein methyltransferase family.

Its subcellular location is the cytoplasm. It carries out the reaction [protein]-L-isoaspartate + S-adenosyl-L-methionine = [protein]-L-isoaspartate alpha-methyl ester + S-adenosyl-L-homocysteine. Functionally, catalyzes the methyl esterification of L-isoaspartyl residues in peptides and proteins that result from spontaneous decomposition of normal L-aspartyl and L-asparaginyl residues. It plays a role in the repair and/or degradation of damaged proteins. The polypeptide is Protein-L-isoaspartate O-methyltransferase (Anaeromyxobacter dehalogenans (strain 2CP-1 / ATCC BAA-258)).